A 468-amino-acid polypeptide reads, in one-letter code: ATP synthase subunit beta (468 aa).

148 to 155 (GGAGVGKT) is an ATP binding site.

This sequence belongs to the ATPase alpha/beta chains family. As to quaternary structure, F-type ATPases have 2 components, CF(1) - the catalytic core - and CF(0) - the membrane proton channel. CF(1) has five subunits: alpha(3), beta(3), gamma(1), delta(1), epsilon(1). CF(0) has three main subunits: a(1), b(2) and c(9-12). The alpha and beta chains form an alternating ring which encloses part of the gamma chain. CF(1) is attached to CF(0) by a central stalk formed by the gamma and epsilon chains, while a peripheral stalk is formed by the delta and b chains.

It is found in the cell inner membrane. The catalysed reaction is ATP + H2O + 4 H(+)(in) = ADP + phosphate + 5 H(+)(out). Its function is as follows. Produces ATP from ADP in the presence of a proton gradient across the membrane. The catalytic sites are hosted primarily by the beta subunits. This chain is ATP synthase subunit beta, found in Xanthomonas campestris pv. campestris (strain 8004).